Consider the following 91-residue polypeptide: Small ribosomal subunit protein bS20 (91 aa).

This sequence belongs to the bacterial ribosomal protein bS20 family.

Functionally, binds directly to 16S ribosomal RNA. The sequence is that of Small ribosomal subunit protein bS20 from Acidithiobacillus ferrooxidans (strain ATCC 23270 / DSM 14882 / CIP 104768 / NCIMB 8455) (Ferrobacillus ferrooxidans (strain ATCC 23270)).